The following is a 282-amino-acid chain: Cytochrome c1 (282 aa).

Residues 1–24 (MTIKLRFVASLALVFGLAAASVPA) form the signal peptide. Positions 62, 65, 66, and 207 each coordinate heme c. Residues 253–273 (WWVLGFLVIFTGLLVATKIVV) form a helical membrane-spanning segment.

As to quaternary structure, the main subunits of complex b-c1 are: cytochrome b, cytochrome c1 and the Rieske protein. Post-translationally, binds 1 heme c group covalently per subunit.

It localises to the cell membrane. Functionally, component of the ubiquinol-cytochrome c reductase complex (complex III or cytochrome b-c1 complex), which is a respiratory chain that generates an electrochemical potential coupled to ATP synthesis. c1 functions as an electron donor to cytochrome c. This Blastochloris viridis (Rhodopseudomonas viridis) protein is Cytochrome c1 (petC).